The chain runs to 527 residues: Transcriptional regulator ATRX (527 aa).

Residues G1–R527 form a disordered region. Residues R14 to G23 show a composition bias toward polar residues. Over residues P27–K46 the composition is skewed to basic and acidic residues. A compositionally biased stretch (basic residues) spans E47–K59. The span at V60–Q84 shows a compositional bias: basic and acidic residues. S62 and S74 each carry phosphoserine. A compositionally biased stretch (basic residues) spans G85–K94. Basic and acidic residues-rich tracts occupy residues K95–E122, N136–K145, D152–Q194, and K204–K250. Residue K105 forms a Glycyl lysine isopeptide (Lys-Gly) (interchain with G-Cter in SUMO2) linkage. Residues S112, S113, and S114 each carry the phosphoserine modification. S162 carries the phosphoserine modification. Residue R184 is modified to Citrulline. The segment covering K267–R297 has biased composition (basic residues). An interaction with DAXX region spans residues L290–S427. Phosphoserine occurs at positions 345, 346, and 354. Positions P368 to K382 are enriched in basic and acidic residues. The span at S387–K398 shows a compositional bias: acidic residues. Over residues E399 to E410 the composition is skewed to basic and acidic residues. Phosphoserine is present on residues S423, S425, and S427. Positions P435–L446 are enriched in basic residues. S449 and S453 each carry phosphoserine. Composition is skewed to basic and acidic residues over residues G454 to G469 and K509 to R518.

This sequence belongs to the SNF2/RAD54 helicase family. In terms of assembly, interacts with DAXX to form the chromatin remodeling complex ATRX:DAXX. Probably binds EZH2. Binds annexin V in a calcium and phosphatidylcholine/phosphatidylserine-dependent manner. Interacts directly with CBX5 via the PxVxL motif. Interacts with RAD50, MRE11 and NBN; indicative for an association with the MRN complex. Interacts with histone MACROH2A1. Interacts with histone H3 peptides methylated at 'Lys-10' with preferences H3K9me3 &gt; H3K9me2 &gt; H3K9me1. Interacts with histone H3 peptides unmethylated at 'Lys-5' (H3K4me0). Interacts with MECP2, SMC1 and SMC3. Interacts with SETDB1, TRIM28 and ZNF274. Post-translationally, citrullinated by PADI4.

Its subcellular location is the nucleus. The protein resides in the chromosome. It is found in the telomere. The protein localises to the PML body. The catalysed reaction is ATP + H2O = ADP + phosphate + H(+). In terms of biological role, involved in transcriptional regulation and chromatin remodeling. Facilitates DNA replication in multiple cellular environments and is required for efficient replication of a subset of genomic loci. Binds to DNA tandem repeat sequences in both telomeres and euchromatin and in vitro binds DNA quadruplex structures. May help stabilizing G-rich regions into regular chromatin structures by remodeling G4 DNA and incorporating H3.3-containing nucleosomes. Catalytic component of the chromatin remodeling complex ATRX:DAXX which has ATP-dependent DNA translocase activity and catalyzes the replication-independent deposition of histone H3.3 in pericentric DNA repeats outside S-phase and telomeres, and the in vitro remodeling of H3.3-containing nucleosomes. Its heterochromatin targeting is proposed to involve a combinatorial readout of histone H3 modifications (specifically methylation states of H3K9 and H3K4) and association with CBX5. Involved in maintaining telomere structural integrity in embryonic stem cells probably implying recruitment of CBX5 to telomeres. May be involved in transcriptional regulation of telomeric repeat-containing RNA (TERRA). Acts as a negative regulator of chromatin incorporation of transcriptionally repressive histone MACROH2A1, particularily at telomeres. Participates in the allele-specific gene expression at the imprinted IGF2/H19 gene locus. On the maternal allele, required for the chromatin occupancy of SMC1 and CTCTF within the H19 imprinting control region (ICR) and involved in esatblishment of histone tails modifications in the ICR. Binds to zinc-finger coding genes with atypical chromatin signatures and regulates its H3K9me3 levels. Forms a complex with ZNF274, TRIM28 and SETDB1 to facilitate the deposition and maintenance of H3K9me3 at the 3' exons of zinc-finger genes. The sequence is that of Transcriptional regulator ATRX (Atrx) from Rattus norvegicus (Rat).